The primary structure comprises 95 residues: Small ribosomal subunit protein bS6 (95 aa).

This sequence belongs to the bacterial ribosomal protein bS6 family. As to quaternary structure, part of the 30S ribosomal subunit.

Functionally, binds together with bS18 to 16S ribosomal RNA. In Bacillus subtilis (strain 168), this protein is Small ribosomal subunit protein bS6 (rpsF).